The sequence spans 570 residues: MGNWAVNEGLSIFVILVWLGLNVFLFINYYKVYDDGPKYNYTRKLLGSALALARAPAACLNFNCMLILLPVCRNLLSFLRGSSACCSTRIRRQLDRNLTFHKMVAWMIALHTAIHTIAHLFNVEWCVNARVGISDRYSIALSDIGDNENEEYLNFAREKIKNPEGGLYVAVTRLAGITGIVITLCLILIITSSTKTIRRSYFEVFWYTHHLFVIFFIGLAIHGAERIVRGQTAESLEEHNLDICADKIEEWGKIKECPVPKFAGNPPMTWKWIVGPMFLYLCERLVRFWRSQQKVVITKVVTHPFKTIELQMKKKGFKMEVGQYIFVKCPKVSKLEWHPFTLTSAPEEDFFSIHIRIVGDWTEGLFNACGCDKQEFQDAWKLPKIAVDGPFGTASEDVFSYEVVMLVGAGIGVTPFASILKSVWYKYCDNATSLKLKKIYFYWLCRDTHAFEWFADLLQLLETQMQERNNANFLSYNIYLTGWDESQANHFAVHHDEEKDVITGLKQKTLYGRPNWDNEFKTIASEHPNTTIGVFLCGPEALAETLSKQSISNSESGPRGVHFIFNKENF.

Topologically, residues 2–9 (GNWAVNEG) are cytoplasmic. Residues 10–36 (LSIFVILVWLGLNVFLFINYYKVYDDG) traverse the membrane as a helical segment. Topologically, residues 37–46 (PKYNYTRKLL) are extracellular. N-linked (GlcNAc...) asparagine glycosylation occurs at Asn40. Residues 47–72 (GSALALARAPAACLNFNCMLILLPVC) traverse the membrane as a helical segment. The Ferric oxidoreductase domain occupies 54-286 (RAPAACLNFN…MFLYLCERLV (233 aa)). The Cytoplasmic portion of the chain corresponds to 73 to 95 (RNLLSFLRGSSACCSTRIRRQLD). The chain crosses the membrane as a helical span at residues 96–130 (RNLTFHKMVAWMIALHTAIHTIAHLFNVEWCVNAR). Heme b-binding residues include His101 and His115. Residues 131 to 163 (VGISDRYSIALSDIGDNENEEYLNFAREKIKNP) are Extracellular-facing. Residues Lys159 and Lys161 each participate in a glycyl lysine isopeptide (Lys-Gly) (interchain with G-Cter in ubiquitin) cross-link. A helical transmembrane segment spans residues 164–194 (EGGLYVAVTRLAGITGIVITLCLILIITSST). The Cytoplasmic portion of the chain corresponds to 195 to 203 (KTIRRSYFE). Residues Arg199 and Ser200 each contribute to the FAD site. The helical transmembrane segment at 204 to 222 (VFWYTHHLFVIFFIGLAIH) threads the bilayer. 5 residues coordinate heme b: Trp206, His209, His222, Arg226, and Ile227. Residues 223 to 267 (GAERIVRGQTAESLEEHNLDICADKIEEWGKIKECPVPKFAGNPP) are Extracellular-facing. Residue Lys255 forms a Glycyl lysine isopeptide (Lys-Gly) (interchain with G-Cter in ubiquitin) linkage. Heme b is bound by residues Met268, Tyr280, and Arg287. The helical transmembrane segment at 268–285 (MTWKWIVGPMFLYLCERL) threads the bilayer. Residues 286 to 570 (VRFWRSQQKV…VHFIFNKENF (285 aa)) are Cytoplasmic-facing. The FAD-binding FR-type domain occupies 287–397 (RFWRSQQKVV…DGPFGTASED (111 aa)). Glycyl lysine isopeptide (Lys-Gly) (interchain with G-Cter in ubiquitin) cross-links involve residues Lys294, Lys299, Lys306, Lys328, and Lys334. FAD is bound by residues Trp337, His338, Pro339, Thr341, His354, Arg356, Trp361, and Thr362. A Glycyl lysine isopeptide (Lys-Gly) (interchain with G-Cter in ubiquitin) cross-link involves residue Lys381. NADPH-binding residues include Ile411, Arg446, and Thr481. Lys506 participates in a covalent cross-link: Glycyl lysine isopeptide (Lys-Gly) (interchain with G-Cter in ubiquitin). Arg513 is a binding site for NADPH. A Glycyl lysine isopeptide (Lys-Gly) (interchain with G-Cter in ubiquitin) cross-link involves residue Lys567.

Component of the phagocyte NADPH oxidase core complex/cytochrome b558 complex, composed of CYBB (heavy chain (beta)) and CYBA (light chain (alpha)). Component of the phagocyte NADPH oxidase complex composed of an obligatory core heterodimer formed by the membrane proteins CYBA and CYBB and the cytosolic regulatory subunits NCF1/p47-phox, NCF2/p67-phox, NCF4/p40-phox and the small GTPase RAC1 or RAC2. Interacts with NCF1 (phosphorylated form). Interacts with NCF2; the interaction is enhanced in the presence of GBP7. Interacts with RAC2. Interacts with RAC1. Interacts with calprotectin (S100A8/9). Interacts with NRROS; the interaction is direct and impairs formation of a stable NADPH oxidase complex. Interacts with CYBC1; CYBC1 may act as a chaperone stabilizing Cytochrome b-245 heterodimer. The CYBA:CYBB complex interacts with GBP7. Requires FAD as cofactor. In terms of processing, glycosylated. Post-translationally, phosphorylated on Ser and Thr residues by PKC during neutrophils activation. Phosphorylation enhances the NADPH oxidase activity and stimulates its interaction with RAC2, NCF2/p67-phox, and NCF1/p47-phox. Undergoes 'Lys-48'-linked polyubiquitination, likely by RNF145, triggering endoplasmic reticulum-associated degradation.

Its subcellular location is the cell membrane. It carries out the reaction NADPH + 2 O2 = 2 superoxide + NADP(+) + H(+). Functionally, catalytic subunit of the phagocyte NADPH oxidase complex that mediates the transfer of electrons from cytosolic NADPH to O2 to produce the superoxide anion (O2(-)). In the activated complex, electrons are first transferred from NADPH to flavin adenine dinucleotide (FAD) and subsequently transferred via two heme molecules to molecular oxygen, producing superoxide through an outer-sphere reaction. Activation of the NADPH oxidase complex is initiated by the assembly of cytosolic subunits of the NADPH oxidase complex with the core NADPH oxidase complex to form a complex at the plasma membrane or phagosomal membrane. This activation process is initiated by phosphorylation dependent binding of the cytosolic NCF1/p47-phox subunit to the C-terminus of CYBA/p22-phox. NADPH oxidase complex assembly is impaired through interaction with NRROS. The sequence is that of NADPH oxidase 2 from Mus musculus (Mouse).